The primary structure comprises 363 residues: Cobalt-precorrin-5B C(1)-methyltransferase (363 aa).

The protein belongs to the CbiD family.

The catalysed reaction is Co-precorrin-5B + S-adenosyl-L-methionine = Co-precorrin-6A + S-adenosyl-L-homocysteine. It functions in the pathway cofactor biosynthesis; adenosylcobalamin biosynthesis; cob(II)yrinate a,c-diamide from sirohydrochlorin (anaerobic route): step 6/10. Catalyzes the methylation of C-1 in cobalt-precorrin-5B to form cobalt-precorrin-6A. The protein is Cobalt-precorrin-5B C(1)-methyltransferase of Treponema denticola (strain ATCC 35405 / DSM 14222 / CIP 103919 / JCM 8153 / KCTC 15104).